A 158-amino-acid polypeptide reads, in one-letter code: Deoxyuridine 5'-triphosphate nucleotidohydrolase (158 aa).

Substrate-binding positions include 66-68 (RSG), Asn79, 83-85 (TID), and Lys93. Residues 139–158 (RGFGSSGVARKGHYQGKPLA) are disordered.

It belongs to the dUTPase family. Mg(2+) is required as a cofactor.

It catalyses the reaction dUTP + H2O = dUMP + diphosphate + H(+). Its pathway is pyrimidine metabolism; dUMP biosynthesis; dUMP from dCTP (dUTP route): step 2/2. Its function is as follows. This enzyme is involved in nucleotide metabolism: it produces dUMP, the immediate precursor of thymidine nucleotides and it decreases the intracellular concentration of dUTP so that uracil cannot be incorporated into DNA. This is Deoxyuridine 5'-triphosphate nucleotidohydrolase from Helicobacter hepaticus (strain ATCC 51449 / 3B1).